Here is a 244-residue protein sequence, read N- to C-terminus: Trypsin (244 aa).

Positions 1 to 15 (MKFLVILVLLGAAVA) are cleaved as a signal peptide. The propeptide at 16–21 (FEDDDK) is activation peptide. A Peptidase S1 domain is found at 22–242 (IVGGFTCAKN…FVTWIQSTIS (221 aa)). Disulfide bonds link Cys28-Cys158, Cys46-Cys62, Cys130-Cys231, Cys137-Cys204, Cys169-Cys183, and Cys194-Cys218. The active-site Charge relay system is the His61. Residues Glu73, Asn75, and Glu83 each coordinate Ca(2+). Asp105 (charge relay system) is an active-site residue. The active-site Charge relay system is the Ser198.

The protein belongs to the peptidase S1 family. Ca(2+) is required as a cofactor.

It localises to the secreted. The protein resides in the extracellular space. The enzyme catalyses Preferential cleavage: Arg-|-Xaa, Lys-|-Xaa.. This chain is Trypsin, found in Xenopus laevis (African clawed frog).